Here is a 134-residue protein sequence, read N- to C-terminus: Thyrotropin subunit beta (134 aa).

The signal sequence occupies residues 1 to 16; the sequence is MSPFFMMSLLFGLTFG. Intrachain disulfides connect Cys22/Cys72, Cys36/Cys87, Cys39/Cys125, Cys47/Cys103, Cys51/Cys105, and Cys108/Cys115. Asn43 is a glycosylation site (N-linked (GlcNAc...) asparagine).

This sequence belongs to the glycoprotein hormones subunit beta family. Heterodimer of a common alpha chain and a unique beta chain which confers biological specificity to thyrotropin, lutropin, follitropin and gonadotropin.

It localises to the secreted. Functionally, indispensable for the control of thyroid structure and metabolism. This is Thyrotropin subunit beta (TSHB) from Gallus gallus (Chicken).